The following is a 342-amino-acid chain: Ribosomal RNA small subunit methyltransferase C (342 aa).

Belongs to the methyltransferase superfamily. RsmC family. In terms of assembly, monomer.

The protein localises to the cytoplasm. The enzyme catalyses guanosine(1207) in 16S rRNA + S-adenosyl-L-methionine = N(2)-methylguanosine(1207) in 16S rRNA + S-adenosyl-L-homocysteine + H(+). In terms of biological role, specifically methylates the guanine in position 1207 of 16S rRNA in the 30S particle. This is Ribosomal RNA small subunit methyltransferase C from Salmonella agona (strain SL483).